Here is a 497-residue protein sequence, read N- to C-terminus: Protein TIC 62, chloroplastic (497 aa).

The transit peptide at 1-55 (MEQAAKATISLSPPSYAGCCMAACPYRSTRHLRRGGGCSARSISSLRHAPSARVY) directs the protein to the chloroplast. 75–104 (VFIAGATGKVGSRAVREFIKLGFRVRAGVR) is a binding site for NADP(+). The disordered stretch occupies residues 310-497 (TEDQLANIPS…SSPTPSTPKL (188 aa)). Copy 1 of the repeat occupies 346 to 367 (PLSPYTAFVDLKPPSSPSPCPP). The interval 346–495 (PLSPYTAFVD…PPSSPTPSTP (150 aa)) is 3 X 22 AA approximate repeats. A compositionally biased stretch (pro residues) spans 359–369 (PSSPSPCPPSA). Over residues 370–387 (AAPAPTSTDTAAAGSSST) the composition is skewed to low complexity. The span at 388 to 408 (LNSSATGTPISVDQPKQQQRP) shows a compositional bias: polar residues. Repeat unit 2 spans residues 408–429 (PLSPYTRYEELKPPSSPSPTPP). The segment covering 430-458 (SAASSASVSASPDTPPAAAASSAALDSSA) has biased composition (low complexity). Residues 459 to 476 (NGTPITGDQLNQQQSPLS) are compositionally biased toward polar residues. Copy 3 of the repeat occupies 474–495 (PLSPYTRYEELKPPSSPTPSTP). Residues 487-497 (PSSPTPSTPKL) show a composition bias toward pro residues.

In terms of assembly, part of the Tic complex. Interacts with TIC110 and TIC55. Interacts with LFNR1 and LFNR2. Component of high molecular weight thylakoid LFNRs-containing protein complexes containing LIR1, LFNR1, LFNR2, TIC62 and TROL proteins.

It is found in the plastid. Its subcellular location is the chloroplast inner membrane. It localises to the chloroplast stroma. The protein localises to the chloroplast thylakoid. Involved in protein precursor import into chloroplasts. Part of the redox regulon consisting of TIC32, TIC 55 and TIC62. Acts as a membrane anchor of LFNR1 and LFNR2. Has a NADPH-dependent dehydrogenase activity, but only after preincubation with lipids. The protein is Protein TIC 62, chloroplastic (TIC62) of Oryza sativa subsp. japonica (Rice).